Consider the following 894-residue polypeptide: MTTIPFCFLFVAFFFSSSTADQRHHSRHLLHQPFFPVVTAAPPPYQPPVSSQPPSPSPHTHHHHKKHLTTTTPPPHEKHLFSSVANPPPPPPSPPHPNPFFPSSDPTSTASHPPPAPPPPASLPTFPANISSLLFPTHNKQSKPPSNGHIARLVTITASVISAAALLSLFAVFIIFIRRTRHRRRSSPADDTKSTRSDALQLFNASPSDGSKKQKQHQQPPKYTSSHTSSEFLYLGTLVNSRSNGLEQQKSPISLSGGITGVLELPPPASSSSSSSYSQYHKLGSPELRPLPPLPKLQSFTPVYKSTEQLNPKRQDFDGDDNENDEFFSPRGSSGRKQSPTRVSDVDQIDNRSINGSGSNSCSPTNFAPSLNASPGTSLKPKSISPPVSLHSQISSNNGIPKRLCPARPPPPPPPPPQVSEVPATMSHSLPGDDSDPEKKVETMKPKLKTLHWDKVRASSSRVMVWDQIKSNSFQVNEEMIETLFKVNDPTSRTRDGVVQSVSQENRFLDPRKSHNIAILLRALNVTADEVCEALIEGNSDTLGPELLECLLKMAPTKEEEDKLKELKDDDDGSPSKIGPAEKFLKALLNIPFAFKRIDAMLYIVKFESEIEYLNRSFDTLEAATGELKNTRMFLKLLEAVLKTGNRMNIGTNRGDAHAFKLDTLLKLVDIKGADGKTTLLHFVVQEIIKFEGARVPFTPSQSHIGDNMAEQSAFQDDLELKKLGLQVVSGLSSQLINVKKAAAMDSNSLINETAEIARGIAKVKEVITELKQETGVERFLESMNSFLNKGEKEITELQSHGDNVMKMVKEVTEYFHGNSETHPFRIFAVVRDFLTILDQVCKEVGRVNERTVYGSMPLHSPSNQTATPLFPVVINNNSRLSPSGSLDDDDGSF.

The signal sequence occupies residues 1–20 (MTTIPFCFLFVAFFFSSSTA). The segment covering 41 to 57 (APPPYQPPVSSQPPSPS) has biased composition (pro residues). The interval 41-129 (APPPYQPPVS…PASLPTFPAN (89 aa)) is disordered. Positions 59-68 (HTHHHHKKHL) are enriched in basic residues. Positions 86–100 (NPPPPPPSPPHPNPF) are enriched in pro residues. Over residues 101–111 (FPSSDPTSTAS) the composition is skewed to low complexity. The span at 112–122 (HPPPAPPPPAS) shows a compositional bias: pro residues. A helical transmembrane segment spans residues 156–176 (ITASVISAAALLSLFAVFIIF). Disordered stretches follow at residues 203–228 (FNASPSDGSKKQKQHQQPPKYTSSHT) and 264–440 (ELPP…PEKK). Positions 270–288 (SSSSSSSYSQYHKLGSPEL) are enriched in low complexity. Composition is skewed to polar residues over residues 298–310 (QSFTPVYKSTEQL), 331–342 (RGSSGRKQSPTR), 351–377 (NRSINGSGSNSCSPTNFAPSLNASPGT), and 390–399 (LHSQISSNNG). The segment covering 407 to 418 (ARPPPPPPPPPQ) has biased composition (pro residues). In terms of domain architecture, FH2 spans 438–864 (EKKVETMKPK…GSMPLHSPSN (427 aa)).

It belongs to the formin-like family. Class-I subfamily.

The protein localises to the membrane. Its function is as follows. Might be involved in the organization and polarity of the actin cytoskeleton. In Arabidopsis thaliana (Mouse-ear cress), this protein is Formin-like protein 2 (FH2).